We begin with the raw amino-acid sequence, 454 residues long: Cathepsin C (454 aa).

The N-terminal stretch at 1-20 (MHWVFHCILIILACLRFTCA) is a signal peptide. Positions 21 to 217 (DTPANCTYED…SKELISLTGN (197 aa)) are excised as a propeptide. N-linked (GlcNAc...) asparagine glycosylation is present at asparagine 25. Disulfide bonds link cysteine 26–cysteine 107, cysteine 244–cysteine 287, and cysteine 280–cysteine 321. Residue cysteine 247 is part of the active site. N-linked (GlcNAc...) asparagine glycosylation occurs at asparagine 265. Phenylalanine 291 is a chloride binding site. Asparagine 326 carries N-linked (GlcNAc...) asparagine glycosylation. A chloride-binding site is contributed by tyrosine 337. Active-site residues include histidine 398 and asparagine 420.

The protein belongs to the peptidase C1 family. Chloride is required as a cofactor.

It is found in the lysosome. Thiol protease. Has a role as a digestive enzyme. This chain is Cathepsin C, found in Schistosoma mansoni (Blood fluke).